Consider the following 237-residue polypeptide: Ergosterol biosynthesis protein 29 (237 aa).

The chain crosses the membrane as a helical span at residues 36-56 (ITLFLIVVGTLAFFNELYITI).

The protein resides in the endoplasmic reticulum membrane. In terms of biological role, part of the third module of ergosterol biosynthesis pathway that includes the late steps of the pathway. ERG29 regulates the activity of the iron-containing C4-methylsterol oxidase ERG25. The third module or late pathway involves the ergosterol synthesis itself through consecutive reactions that mainly occur in the endoplasmic reticulum (ER) membrane. Firstly, the squalene synthase ERG9 catalyzes the condensation of 2 farnesyl pyrophosphate moieties to form squalene, which is the precursor of all steroids. Squalene synthase is crucial for balancing the incorporation of farnesyl diphosphate (FPP) into sterol and nonsterol isoprene synthesis. Secondly, the squalene epoxidase ERG1 catalyzes the stereospecific oxidation of squalene to (S)-2,3-epoxysqualene, which is considered to be a rate-limiting enzyme in steroid biosynthesis. Then, the lanosterol synthase ERG7 catalyzes the cyclization of (S)-2,3 oxidosqualene to lanosterol, a reaction that forms the sterol core. In the next steps, lanosterol is transformed to zymosterol through a complex process involving various demethylation, reduction and desaturation reactions. The lanosterol 14-alpha-demethylase ERG11 (also known as CYP51) catalyzes C14-demethylation of lanosterol to produce 4,4'-dimethyl cholesta-8,14,24-triene-3-beta-ol, which is critical for ergosterol biosynthesis. The C-14 reductase ERG24 reduces the C14=C15 double bond of 4,4-dimethyl-cholesta-8,14,24-trienol to produce 4,4-dimethyl-cholesta-8,24-dienol. 4,4-dimethyl-cholesta-8,24-dienol is substrate of the C-4 demethylation complex ERG25-ERG26-ERG27 in which ERG25 catalyzes the three-step monooxygenation required for the demethylation of 4,4-dimethyl and 4alpha-methylsterols, ERG26 catalyzes the oxidative decarboxylation that results in a reduction of the 3-beta-hydroxy group at the C-3 carbon to an oxo group, and ERG27 is responsible for the reduction of the keto group on the C-3. ERG28 has a role as a scaffold to help anchor ERG25, ERG26 and ERG27 to the endoplasmic reticulum and ERG29 regulates the activity of the iron-containing C4-methylsterol oxidase ERG25. Then, the sterol 24-C-methyltransferase ERG6 catalyzes the methyl transfer from S-adenosyl-methionine to the C-24 of zymosterol to form fecosterol. The C-8 sterol isomerase ERG2 catalyzes the reaction which results in unsaturation at C-7 in the B ring of sterols and thus converts fecosterol to episterol. The sterol-C5-desaturase ERG3 then catalyzes the introduction of a C-5 double bond in the B ring to produce 5-dehydroepisterol. The C-22 sterol desaturase ERG5 further converts 5-dehydroepisterol into ergosta-5,7,22,24(28)-tetraen-3beta-ol by forming the C-22(23) double bond in the sterol side chain. Finally, ergosta-5,7,22,24(28)-tetraen-3beta-ol is substrate of the C-24(28) sterol reductase ERG4 to produce ergosterol. Functionally, plays a role in maintaining mitochondrial and plasma membrane integrity and consequently impacting the iron homeostasis, respiratory metabolism and antioxidant response. The protein is Ergosterol biosynthesis protein 29 of Saccharomyces cerevisiae (strain ATCC 204508 / S288c) (Baker's yeast).